A 139-amino-acid polypeptide reads, in one-letter code: MTIRLSDEARQLIAVFETETDATAVDCLPDDDRVVYVVTAGEMGAAIGDGGSRVDALEATLGRSVVLVEDAPTAEGFVANALSPAAVYNVTVSENDTTVAYAEVAHEDKGVAIGADGTNIETAKELAARHFDIDDIQLT.

A KH domain is found at Asp-31–Thr-97.

Belongs to the NusA family.

Its subcellular location is the cytoplasm. Its function is as follows. Participates in transcription termination. The polypeptide is Probable transcription termination protein NusA (Halobacterium salinarum (strain ATCC 29341 / DSM 671 / R1)).